Reading from the N-terminus, the 129-residue chain is NADH-quinone oxidoreductase subunit K 2 (129 aa).

The next 3 helical transmembrane spans lie at 3–23 (LAYP…GVLA), 28–48 (ILVL…LVAF), and 68–88 (LFTI…VLAV). The disordered stretch occupies residues 98-129 (DKLRDTAEGPEPDGPGTDGSAPTAAEKAEATA). Positions 111 to 122 (GPGTDGSAPTAA) are enriched in low complexity.

Belongs to the complex I subunit 4L family. As to quaternary structure, NDH-1 is composed of 14 different subunits. Subunits NuoA, H, J, K, L, M, N constitute the membrane sector of the complex.

It localises to the cell membrane. The catalysed reaction is a quinone + NADH + 5 H(+)(in) = a quinol + NAD(+) + 4 H(+)(out). Its function is as follows. NDH-1 shuttles electrons from NADH, via FMN and iron-sulfur (Fe-S) centers, to quinones in the respiratory chain. The immediate electron acceptor for the enzyme in this species is believed to be a menaquinone. Couples the redox reaction to proton translocation (for every two electrons transferred, four hydrogen ions are translocated across the cytoplasmic membrane), and thus conserves the redox energy in a proton gradient. This Streptomyces avermitilis (strain ATCC 31267 / DSM 46492 / JCM 5070 / NBRC 14893 / NCIMB 12804 / NRRL 8165 / MA-4680) protein is NADH-quinone oxidoreductase subunit K 2.